The following is a 283-amino-acid chain: MTNIINGRQIAKQLNQETKTRVDKLKEEGIIPGIVVILVGDDPASVIYTRNKQKNAEKLGMKSILRKFPKDVSQAEVLQAIHHYNDDPTIHAILIQLPLPKHLNQTELIEAIAPEKDVDGFNSKNVGKLYNNEEGHYPVSCTSRGIMTLLHTYLDKIEGLNVTIVGRSILVSRPLQSLLINENATVTMVSLHTDNIDYYTKHADILVVAAGKPNLIKKDQVKPGATVIDVGINRMANHYLVGDVDFDDVKEVAKNITPVPGGVGPMTIATLMQQTVDLAEWNK.

NADP(+) contacts are provided by residues 166–168 and I232; that span reads GRS.

The protein belongs to the tetrahydrofolate dehydrogenase/cyclohydrolase family. Homodimer.

It catalyses the reaction (6R)-5,10-methylene-5,6,7,8-tetrahydrofolate + NADP(+) = (6R)-5,10-methenyltetrahydrofolate + NADPH. The catalysed reaction is (6R)-5,10-methenyltetrahydrofolate + H2O = (6R)-10-formyltetrahydrofolate + H(+). Its pathway is one-carbon metabolism; tetrahydrofolate interconversion. Functionally, catalyzes the oxidation of 5,10-methylenetetrahydrofolate to 5,10-methenyltetrahydrofolate and then the hydrolysis of 5,10-methenyltetrahydrofolate to 10-formyltetrahydrofolate. In Lactobacillus johnsonii (strain CNCM I-12250 / La1 / NCC 533), this protein is Bifunctional protein FolD 1.